A 223-amino-acid chain; its full sequence is MFITFEGIDGAGKSTQVKMLRKLLISKGLEVLTLREPGGTDISESIRDILLEVKNDITPIGELLLFAASRAELVQKVIKPALSDHATVLLDRFYDSTSAYQGYGRGLDLALLHQINRIASCSLEPDITFYLDLSPEDAMIRKFSEKSLPLAFEDEELDRMERSGLEFYTRVRNGYQTIAASQPRRVVTIDATLEPDAIHRKITETIMSRRGSLLQKKEGGVEA.

Residue glycine 7 to serine 14 coordinates ATP.

This sequence belongs to the thymidylate kinase family.

The catalysed reaction is dTMP + ATP = dTDP + ADP. Functionally, phosphorylation of dTMP to form dTDP in both de novo and salvage pathways of dTTP synthesis. The protein is Thymidylate kinase of Prosthecochloris aestuarii (strain DSM 271 / SK 413).